The following is a 337-amino-acid chain: Cytoskeleton protein RodZ (337 aa).

The Cytoplasmic portion of the chain corresponds to M1 to G111. The region spanning L19–L71 is the HTH cro/C1-type domain. The H-T-H motif DNA-binding region spans Q30–E49. Residues W112–W132 form a helical; Signal-anchor for type II membrane protein membrane-spanning segment. At W133–Q337 the chain is on the periplasmic side. Residues T145–N167 are compositionally biased toward polar residues. The interval T145–A236 is disordered. Residues T168–Q207 show a composition bias toward low complexity. Residues N208–V218 show a composition bias toward polar residues. Low complexity predominate over residues D219–A236.

Belongs to the RodZ family.

It localises to the cell inner membrane. Cytoskeletal protein that is involved in cell-shape control through regulation of the length of the long axis. In Escherichia coli O139:H28 (strain E24377A / ETEC), this protein is Cytoskeleton protein RodZ.